The sequence spans 1683 residues: A-kinase anchor protein SPHKAP (1683 aa).

Polar residues-rich tracts occupy residues 1–14 and 289–301; these read MDVN…SNVE and AENT…NPSA. Disordered stretches follow at residues 1-30, 275-320, and 582-601; these read MDVN…ITSS, RMPS…ATNY, and LLPT…LVTE. A PKA-RII subunit binding domain region spans residues 910–927; it reads FAEELAETVVSMATEIAA. The interval 960–983 is disordered; the sequence is LKRKKENSGTGSTVRKHKPPRLSE. 8 positions are modified to phosphoserine: Ser-1006, Ser-1066, Ser-1088, Ser-1101, Ser-1102, Ser-1105, Ser-1240, and Ser-1269. Disordered stretches follow at residues 1359 to 1387 and 1415 to 1518; these read VTEG…PTRE and ETDQ…DTSS. Polar residues predominate over residues 1362 to 1371; sequence GNCSPVSSPS. A compositionally biased stretch (basic and acidic residues) spans 1469 to 1490; the sequence is LETREELEVDVLKEDITLDESR. Low complexity predominate over residues 1492–1504; sequence PPSSSEESTGSWS.

It belongs to the AKAP110 family. In terms of assembly, interacts (via the PKA-RII subunit binding domain) with the RI subunit of PKA. Interacts with SPHK1; the interaction greatly reduces SPHK1 activity. As to expression, abundant in heart ventricle (at protein level).

It localises to the cytoplasm. Functionally, anchoring protein that binds preferentially to the type I regulatory subunit of c-AMP-dependent protein kinase (PKA type I) and targets it to distinct subcellular compartments. May act as a converging factor linking cAMP and sphingosine signaling pathways. Plays a regulatory role in the modulation of SPHK1. In Rattus norvegicus (Rat), this protein is A-kinase anchor protein SPHKAP (Sphkap).